We begin with the raw amino-acid sequence, 111 residues long: Universal stress protein B (111 aa).

Residues 1–21 (MISTVSLFWALCVVCIVNMAR) traverse the membrane as a helical segment. Residues 22 to 89 (YFSSLRALLV…IRRCERVRRQ (68 aa)) lie on the Cytoplasmic side of the membrane. A helical transmembrane segment spans residues 90–110 (FLLTSALCGLVVVSLIALMIW). His111 is a topological domain (periplasmic).

The protein belongs to the universal stress protein B family.

Its subcellular location is the cell inner membrane. The chain is Universal stress protein B (uspB) from Salmonella choleraesuis (strain SC-B67).